Here is a 601-residue protein sequence, read N- to C-terminus: uncharacterized protein (601 aa).

The signal sequence occupies residues 1 to 24 (MKLSSLPSGLGLASLLGLISSATA).

The protein resides in the membrane. This is an uncharacterized protein from Schizosaccharomyces pombe (strain 972 / ATCC 24843) (Fission yeast).